A 238-amino-acid polypeptide reads, in one-letter code: Monocyte to macrophage differentiation factor (238 aa).

Residues 1 to 28 (MRFKNRFQRFMNHRAPANGRYKPTCYEH) lie on the Cytoplasmic side of the membrane. Residues 29–49 (AANCYTHAFLIVPAIVGSALL) traverse the membrane as a helical segment. Residues 50-61 (HRLSDDCWEKIT) are Lumenal-facing. A helical transmembrane segment spans residues 62 to 82 (AWIYGMGLCALFIVSTVFHIV). The Cytoplasmic portion of the chain corresponds to 83–101 (SWKKSHLRTVEHCFHMCDR). Residues 102–122 (MVIYFFIAASYAPWLNLRELG) traverse the membrane as a helical segment. Residues 123–124 (PL) are Lumenal-facing. The chain crosses the membrane as a helical span at residues 125-145 (ASHMRWFIWLMAAGGTIYVFL). Residues 146–151 (YHEKYK) lie on the Cytoplasmic side of the membrane. Residues 152–172 (VVELFFYLTMGFSPALVVTSM) traverse the membrane as a helical segment. The Lumenal portion of the chain corresponds to 173 to 174 (NN). The chain crosses the membrane as a helical span at residues 175–195 (TDGLQELACGGLIYCLGVVFF). Topologically, residues 196 to 198 (KSD) are cytoplasmic. A helical transmembrane segment spans residues 199 to 219 (GIIPFAHAIWHLFVATAAAVH). At 220–238 (YYAIWKYLYRSPTDFMRHL) the chain is on the lumenal side.

The protein belongs to the ADIPOR family. As to expression, exhibits relatively ubiquitous expression with preferential expression in mature (in vitro differentiated) macrophages.

The protein resides in the late endosome membrane. It localises to the lysosome membrane. Functionally, involved in the dynamics of lysosomal membranes associated with microglial activation following brain lesion. The protein is Monocyte to macrophage differentiation factor of Homo sapiens (Human).